The sequence spans 176 residues: Shikimate kinase (176 aa).

14 to 19 serves as a coordination point for ATP; the sequence is GAGKSS. Residue Ser18 participates in Mg(2+) binding. Substrate is bound by residues Asp36, Arg60, and Gly82. Arg120 contacts ATP. Residue Arg138 participates in substrate binding.

It belongs to the shikimate kinase family. Monomer. The cofactor is Mg(2+).

The protein localises to the cytoplasm. The catalysed reaction is shikimate + ATP = 3-phosphoshikimate + ADP + H(+). The protein operates within metabolic intermediate biosynthesis; chorismate biosynthesis; chorismate from D-erythrose 4-phosphate and phosphoenolpyruvate: step 5/7. Functionally, catalyzes the specific phosphorylation of the 3-hydroxyl group of shikimic acid using ATP as a cosubstrate. This Dehalococcoides mccartyi (strain ATCC BAA-2100 / JCM 16839 / KCTC 5957 / BAV1) protein is Shikimate kinase.